Reading from the N-terminus, the 186-residue chain is MTPSPPPITYISIPLPTNDVVSRSIHNLTTAISSHRPWSELIFSGDFSLPESFSSLLLRSKTNFNYFFVNYTIIVSTCAAFALITASPVALIVVGAIIALWLIFHFFREDPLILWSFQVGDRTVLLFLVLASVWAIWFTNSAVNLAVGVSVGLLLCIIHAVFRNSDELFLEEDDAINGGLIGSNLR.

4 helical membrane-spanning segments follow: residues 66-86 (YFFV…LITA), 87-107 (SPVA…FHFF), 119-139 (VGDR…IWFT), and 142-162 (AVNL…HAVF).

Belongs to the PRA1 family. In terms of tissue distribution, expressed in roots and trichomes.

The protein resides in the endoplasmic reticulum membrane. Its function is as follows. May be involved in both secretory and endocytic intracellular trafficking in the endosomal/prevacuolar compartments. The sequence is that of PRA1 family protein G2 (PRA1G2) from Arabidopsis thaliana (Mouse-ear cress).